We begin with the raw amino-acid sequence, 567 residues long: Type 2 DNA topoisomerase 6 subunit B (567 aa).

Residues asparagine 46, aspartate 78, 99–100, 109–116, and lysine 472 each bind ATP; these read TK and GQQGIGIS.

This sequence belongs to the TOP6B family. Homodimer. Heterotetramer of two Top6A and two Top6B chains.

The catalysed reaction is ATP-dependent breakage, passage and rejoining of double-stranded DNA.. Functionally, relaxes both positive and negative superturns and exhibits a strong decatenase activity. The chain is Type 2 DNA topoisomerase 6 subunit B from Thermococcus kodakarensis (strain ATCC BAA-918 / JCM 12380 / KOD1) (Pyrococcus kodakaraensis (strain KOD1)).